The chain runs to 147 residues: Hemoglobin subunit beta (147 aa).

At Val2 the chain carries N-acetylvaline. The 145-residue stretch at 3-147 (HLTGDEKAAV…VANALAHKYH (145 aa)) folds into the Globin domain. Residue Thr13 is modified to Phosphothreonine. Ser45 carries the phosphoserine modification. Lys60 is modified (N6-acetyllysine). His64 is a heme b binding site. Lys83 bears the N6-acetyllysine mark. Residue His93 participates in heme b binding. The residue at position 94 (Cys94) is an S-nitrosocysteine. Lys145 bears the N6-acetyllysine mark.

The protein belongs to the globin family. As to quaternary structure, heterotetramer of two alpha chains and two beta chains. Red blood cells.

Involved in oxygen transport from the lung to the various peripheral tissues. This is Hemoglobin subunit beta (HBB) from Alouatta belzebul (Red-handed howler monkey).